A 704-amino-acid chain; its full sequence is Arylphorin (704 aa).

The first 16 residues, 1–16 (MKIVLVLAGLIALVQS), serve as a signal peptide directing secretion. 3 N-linked (GlcNAc...) asparagine glycosylation sites follow: Asn73, Asn212, and Asn360.

This sequence belongs to the hemocyanin family. In terms of assembly, homohexamer of two stacked trimers; disulfide-linked. Glycosylation at Asn-360 is required for proper folding.

It is found in the secreted. Its subcellular location is the extracellular space. Arylphorin is a larval storage protein (LSP) which may serve as a storage protein used primarily as a source of aromatic amino acids for protein synthesis during metamorphosis. It is a constituent of the sclerotizing system of the cuticle, and serves as a carrier for ecdysteroid hormone. This chain is Arylphorin, found in Antheraea pernyi (Chinese oak silk moth).